A 62-amino-acid chain; its full sequence is MALDGSSGGGSNVETLLIVAIIVVIMAIMLYYFWWMPRQQQKKCSKAEECTCNNGSCSLKTS.

Residues 16–36 traverse the membrane as a helical segment; the sequence is LLIVAIIVVIMAIMLYYFWWM.

Belongs to the asfivirus inner membrane protein p12 family. In terms of assembly, homomultimer; disulfide-linked. In terms of processing, not glycosylated.

The protein localises to the virion membrane. This African swine fever virus (isolate Tick/Malawi/Lil 20-1/1983) (ASFV) protein is Inner membrane protein p12.